The sequence spans 215 residues: Orotate phosphoribosyltransferase (215 aa).

Lysine 25 contacts 5-phospho-alpha-D-ribose 1-diphosphate. Phenylalanine 33–phenylalanine 34 contributes to the orotate binding site. 5-phospho-alpha-D-ribose 1-diphosphate is bound by residues tyrosine 71–lysine 72, arginine 98, lysine 99, lysine 102, histidine 104, and aspartate 124–alanine 132. Orotate is bound by residues threonine 128 and arginine 156.

This sequence belongs to the purine/pyrimidine phosphoribosyltransferase family. PyrE subfamily. Homodimer.

The enzyme catalyses orotidine 5'-phosphate + diphosphate = orotate + 5-phospho-alpha-D-ribose 1-diphosphate. The protein operates within pyrimidine metabolism; UMP biosynthesis via de novo pathway; UMP from orotate: step 1/2. In terms of biological role, catalyzes the transfer of a ribosyl phosphate group from 5-phosphoribose 1-diphosphate to orotate, leading to the formation of orotidine monophosphate (OMP). The polypeptide is Orotate phosphoribosyltransferase (ura5) (Schizosaccharomyces pombe (strain 972 / ATCC 24843) (Fission yeast)).